A 177-amino-acid chain; its full sequence is Transcription termination/antitermination protein NusG (177 aa).

Residues glutamate 128–valine 156 form the KOW domain.

This sequence belongs to the NusG family.

Its function is as follows. Participates in transcription elongation, termination and antitermination. Stimulates RNA polymerase pausing at U107 and U144 in the trp leader. NusG-stimulated pausing is sequence specific. Does not affect trp leader termination. The polypeptide is Transcription termination/antitermination protein NusG (Bacillus subtilis (strain 168)).